The following is a 410-amino-acid chain: 3-phenylpropionate/cinnamic acid dioxygenase ferredoxin--NAD(+) reductase component (410 aa).

5–36 (TIIIVGGGQAAAMAAASLRQQGFTGELHLFSD) serves as a coordination point for FAD. An NAD(+)-binding site is contributed by 146-184 (SVVIVGAGTIGLELAASATQRSAAQRSAAQRRCKVTVIE).

It belongs to the bacterial ring-hydroxylating dioxygenase ferredoxin reductase family. In terms of assembly, this dioxygenase system consists of four proteins: the two subunits of the hydroxylase component (HcaE and HcaF), a ferredoxin (HcaC) and a ferredoxin reductase (HcaD). The cofactor is FAD.

It catalyses the reaction 2 reduced [2Fe-2S]-[ferredoxin] + NAD(+) + H(+) = 2 oxidized [2Fe-2S]-[ferredoxin] + NADH. It participates in aromatic compound metabolism; 3-phenylpropanoate degradation. In terms of biological role, part of the multicomponent 3-phenylpropionate dioxygenase, that converts 3-phenylpropionic acid (PP) and cinnamic acid (CI) into 3-phenylpropionate-dihydrodiol (PP-dihydrodiol) and cinnamic acid-dihydrodiol (CI-dihydrodiol), respectively. The polypeptide is 3-phenylpropionate/cinnamic acid dioxygenase ferredoxin--NAD(+) reductase component (Shigella flexneri serotype 5b (strain 8401)).